Reading from the N-terminus, the 1770-residue chain is Transposon Ty2-GR1 Gag-Pol polyprotein (1770 aa).

Polar residues-rich tracts occupy residues 1-11, 19-39, and 49-60; these read MESQQLHQNPH, ASVTSKEVPSNQDPLAVSASN, and KVNSQQETTPGT. Disordered stretches follow at residues 1 to 86 and 360 to 453; these read MESQ…GQYQ and HSEY…LPDH. Residues 295 to 397 form an RNA-binding region; sequence ENNINVSDRL…SSKPRAAKAH (103 aa). The segment covering 369 to 381 has biased composition (low complexity); sequence TSPNTTNTKVTTR. The span at 399-408 shows a compositional bias: polar residues; that stretch reads IATSSKFSRV. D457 serves as the catalytic For protease activity; shared with dimeric partner. The tract at residues 579–636 is integrase-type zinc finger-like; sequence NVNKSKSVNKYPYPLIHRMLGHANFRSIQKSLKKNAVTYLKESDIEWSNASTYQCPDC. The region spanning 656–831 is the Integrase catalytic domain; that stretch reads ESYEPFQYLH…AGLDITTILP (176 aa). Mg(2+) contacts are provided by D667 and D732. Disordered stretches follow at residues 1004-1034, 1059-1135, 1146-1165, and 1170-1205; these read MGGTVESDTTSPRHSSTFTARNQNRPGSTNE, TEEP…KSSK, LPLPDLTHKSPTDTSDVSKD, and HSRQTNSSLGGMDDSNVLTTTKSKKRSLEDNETEIE. Composition is skewed to polar residues over residues 1009 to 1034 and 1065 to 1082; these read ESDTTSPRHSSTFTARNQNRPGSTNE and QRNSDTNIKYRTTNSTPS. Residues 1151–1165 show a composition bias toward basic and acidic residues; it reads LTHKSPTDTSDVSKD. Residues 1193-1227 carry the Bipartite nuclear localization signal motif; it reads KKRSLEDNETEIEVSRDTWNNKNMRSLEPPRSKKR. In terms of domain architecture, Reverse transcriptase Ty1/copia-type spans 1353 to 1491; the sequence is NDYYITQLDI…DILGLEIKYQ (139 aa). Residues D1361, D1442, D1443, D1625, E1667, and D1700 each contribute to the Mg(2+) site. One can recognise an RNase H Ty1/copia-type domain in the interval 1625–1767; that stretch reads DASYGNQPYY…IKTFKLLTNK (143 aa).

In terms of assembly, the capsid protein forms a homotrimer, from which the VLPs are assembled. The protease is a homodimer, whose active site consists of two apposed aspartic acid residues. In terms of processing, initially, virus-like particles (VLPs) are composed of the structural unprocessed proteins Gag and Gag-Pol, and also contain the host initiator methionine tRNA (tRNA(i)-Met) which serves as a primer for minus-strand DNA synthesis, and a dimer of genomic Ty RNA. Processing of the polyproteins occurs within the particle and proceeds by an ordered pathway, called maturation. First, the protease (PR) is released by autocatalytic cleavage of the Gag-Pol polyprotein, and this cleavage is a prerequisite for subsequent processing at the remaining sites to release the mature structural and catalytic proteins. Maturation takes place prior to the RT reaction and is required to produce transposition-competent VLPs.

It localises to the cytoplasm. The protein resides in the nucleus. The catalysed reaction is DNA(n) + a 2'-deoxyribonucleoside 5'-triphosphate = DNA(n+1) + diphosphate. It catalyses the reaction Endonucleolytic cleavage to 5'-phosphomonoester.. In terms of biological role, capsid protein (CA) is the structural component of the virus-like particle (VLP), forming the shell that encapsulates the retrotransposons dimeric RNA genome. The particles are assembled from trimer-clustered units and there are holes in the capsid shells that allow for the diffusion of macromolecules. CA also has nucleocapsid-like chaperone activity, promoting primer tRNA(i)-Met annealing to the multipartite primer-binding site (PBS), dimerization of Ty2 RNA and initiation of reverse transcription. Its function is as follows. The aspartyl protease (PR) mediates the proteolytic cleavages of the Gag and Gag-Pol polyproteins after assembly of the VLP. Reverse transcriptase/ribonuclease H (RT) is a multifunctional enzyme that catalyzes the conversion of the retro-elements RNA genome into dsDNA within the VLP. The enzyme displays a DNA polymerase activity that can copy either DNA or RNA templates, and a ribonuclease H (RNase H) activity that cleaves the RNA strand of RNA-DNA heteroduplexes during plus-strand synthesis and hydrolyzes RNA primers. The conversion leads to a linear dsDNA copy of the retrotransposon that includes long terminal repeats (LTRs) at both ends. Functionally, integrase (IN) targets the VLP to the nucleus, where a subparticle preintegration complex (PIC) containing at least integrase and the newly synthesized dsDNA copy of the retrotransposon must transit the nuclear membrane. Once in the nucleus, integrase performs the integration of the dsDNA into the host genome. This Saccharomyces cerevisiae (strain ATCC 204508 / S288c) (Baker's yeast) protein is Transposon Ty2-GR1 Gag-Pol polyprotein (TY2B-GR1).